Here is a 206-residue protein sequence, read N- to C-terminus: Potassium channel B446_29190 (206 aa).

Residue methionine 1 is a topological domain, cytoplasmic. The helical transmembrane segment at 2 to 25 (NESGRVEAFSDGVFAIAITLLILD) threads the bilayer. The RxxxFSD motif signature appears at 6 to 12 (RVEAFSD). The Extracellular segment spans residues 26 to 44 (IKVPKADGPGGLWHALGAQ). The short helix H1 stretch occupies residues 31–34 (ADGP). The tract at residues 36-42 (GLWHALG) is short helix H2. Residues 45–70 (WPSYAAYVVSFLVIGIMWVNHHQVFS) form a helical membrane-spanning segment. The Cytoplasmic portion of the chain corresponds to 71-76 (YVARVD). A helical membrane pass occupies residues 77-102 (RALMFLNLLVLMVVAAVPWPTAMLAE). Residues 103-110 (YLREDRAS) lie on the Extracellular side of the membrane. Residues 111-135 (HVAAAVYSLVMVAMALAFQALWWHL) traverse the membrane as a helical segment. Residues 136–147 (TRTGHLFDPRVD) lie on the Cytoplasmic side of the membrane. The chain crosses the membrane as a helical span at residues 148–174 (APAARATRIRFALGSLGYPLTVGLAFV). Topologically, residues 175–176 (SA) are extracellular. Residues 177–192 (PLTLAAHGLLALYYGF) traverse the membrane as a helical segment. Residues 193–206 (NQVPVPTREAAAPS) are Cytoplasmic-facing.

It belongs to the TMEM175 family. Homotetramer.

The protein localises to the membrane. It catalyses the reaction K(+)(in) = K(+)(out). Its function is as follows. Potassium channel. This is Potassium channel B446_29190 from Streptomyces collinus (strain DSM 40733 / Tue 365).